Consider the following 154-residue polypeptide: Ribosomal RNA large subunit methyltransferase H (154 aa).

Residues Leu-70, Gly-102, and 121–126 contribute to the S-adenosyl-L-methionine site; that span reads LSRLTF.

This sequence belongs to the RNA methyltransferase RlmH family. Homodimer.

The protein resides in the cytoplasm. It catalyses the reaction pseudouridine(1915) in 23S rRNA + S-adenosyl-L-methionine = N(3)-methylpseudouridine(1915) in 23S rRNA + S-adenosyl-L-homocysteine + H(+). Functionally, specifically methylates the pseudouridine at position 1915 (m3Psi1915) in 23S rRNA. The protein is Ribosomal RNA large subunit methyltransferase H of Geobacter metallireducens (strain ATCC 53774 / DSM 7210 / GS-15).